Consider the following 131-residue polypeptide: Classical arabinogalactan protein 2 (131 aa).

The first 21 residues, 1-21 (MNSKAMQALIFLGFLATSCLA), serve as a signal peptide directing secretion. Gln-22 is subject to Pyrrolidone carboxylic acid. 4-hydroxyproline occurs at positions 24, 26, 28, 34, and 35. 5 O-linked (Ara...) hydroxyproline glycosylation sites follow: Pro-24, Pro-26, Pro-28, Pro-34, and Pro-35. Residues 24–106 (PAPAPTTVTP…PGPDGAADAP (83 aa)) form a disordered region. 2 stretches are compositionally biased toward pro residues: residues 25-38 (APAP…PTAL) and 49-64 (IASP…PAPT). Composition is skewed to low complexity over residues 65–76 (TSPTTSPVASPP) and 90–106 (TPTS…ADAP). Residue Ser-107 is the site of GPI-anchor amidated serine attachment. A propeptide spans 108–131 (AAWANKAFLVGTAVAGALYAVVLA) (removed in mature form).

The protein belongs to the classical AGP family. O-glycosylated on hydroxyprolines; noncontiguous hydroxylproline residues are glycosylated with arabinogalactan.

Its subcellular location is the cell membrane. Functionally, proteoglycan that seems to be implicated in diverse developmental roles such as differentiation, cell-cell recognition, embryogenesis and programmed cell death. This is Classical arabinogalactan protein 2 (AGP2) from Arabidopsis thaliana (Mouse-ear cress).